Consider the following 372-residue polypeptide: Glutamate 5-kinase (372 aa).

Lys14 provides a ligand contact to ATP. Residues Ser54, Asp141, and Asn153 each contribute to the substrate site. 173-174 (TD) is a binding site for ATP. The region spanning 280–358 (RGTLVLDAGA…DAIESLLGYS (79 aa)) is the PUA domain.

This sequence belongs to the glutamate 5-kinase family.

It is found in the cytoplasm. The catalysed reaction is L-glutamate + ATP = L-glutamyl 5-phosphate + ADP. Its pathway is amino-acid biosynthesis; L-proline biosynthesis; L-glutamate 5-semialdehyde from L-glutamate: step 1/2. In terms of biological role, catalyzes the transfer of a phosphate group to glutamate to form L-glutamate 5-phosphate. In Pseudomonas putida (strain W619), this protein is Glutamate 5-kinase.